Reading from the N-terminus, the 76-residue chain is MLSSEKIARINELAKKAKIEGLTAEEKQEQIQLRTEYIAAFRASMIETLHAVKVIDPNGNDVTPQKLKDSKKKRLH.

A disordered region spans residues Asp56–His76.

The protein belongs to the UPF0291 family.

It localises to the cytoplasm. The polypeptide is UPF0291 protein Aflv_1503 (Anoxybacillus flavithermus (strain DSM 21510 / WK1)).